The chain runs to 1381 residues: DNA-directed RNA polymerase subunit beta' (1381 aa).

Zn(2+) is bound by residues cysteine 70, cysteine 72, cysteine 85, and cysteine 88. Residues aspartate 461, aspartate 463, and aspartate 465 each contribute to the Mg(2+) site. Zn(2+)-binding residues include cysteine 801, cysteine 875, cysteine 882, and cysteine 885. Residues 1362–1381 (VEIEGDENSNKKSLDMHAAN) are disordered. Over residues 1369–1381 (NSNKKSLDMHAAN) the composition is skewed to basic and acidic residues.

The protein belongs to the RNA polymerase beta' chain family. As to quaternary structure, the RNAP catalytic core consists of 2 alpha, 1 beta, 1 beta' and 1 omega subunit. When a sigma factor is associated with the core the holoenzyme is formed, which can initiate transcription. The cofactor is Mg(2+). Requires Zn(2+) as cofactor.

The enzyme catalyses RNA(n) + a ribonucleoside 5'-triphosphate = RNA(n+1) + diphosphate. In terms of biological role, DNA-dependent RNA polymerase catalyzes the transcription of DNA into RNA using the four ribonucleoside triphosphates as substrates. This Syntrophus aciditrophicus (strain SB) protein is DNA-directed RNA polymerase subunit beta'.